The primary structure comprises 506 residues: Tabersonine 16-hydroxylase 1 (506 aa).

Residues 1–21 (MEFYYFLYLAFLLFCFILSKT) form a helical membrane-spanning segment. A heme-binding site is contributed by cysteine 447.

This sequence belongs to the cytochrome P450 family. Heme serves as cofactor. In terms of tissue distribution, predominantly expressed in young leaves of mature plants. Low expression in roots and flowers, but not detected in stems and old leaves. Found predominantly in leaf epidermis. Barely detected in roots, internodes, young and mature leaves, and flower buds, but relatively abundant in fully developed flowers. Not detected in leaf epidermal cells.

It is found in the endoplasmic reticulum membrane. It catalyses the reaction (-)-tabersonine + reduced [NADPH--hemoprotein reductase] + O2 = 16-hydroxytabersonine + oxidized [NADPH--hemoprotein reductase] + H2O + H(+). The protein operates within alkaloid biosynthesis; vindoline biosynthesis. Its function is as follows. Involved in the flower biosynthesis of vindoline, a precursor of vinblastine and vincristine. Hydroxylates specifically tabersonine, 2,3-dihydrotabersonine and 2,3-dihydro-3-hydroxytabersonine, but has no activity with naringenin, tryptamine, secologanin, strictosidine, ajmalicine, vindoline and catharanthine. This is Tabersonine 16-hydroxylase 1 from Catharanthus roseus (Madagascar periwinkle).